Here is a 702-residue protein sequence, read N- to C-terminus: Methionine--tRNA ligase (702 aa).

The 'HIGH' region signature appears at 23 to 33 (PYANGPLHLGH). Zn(2+) contacts are provided by Cys-154, Cys-157, Cys-167, and Cys-170. Residues 341–345 (KMSKS) carry the 'KMSKS' region motif. Lys-344 contacts ATP. The segment at 562 to 593 (LAPPPASAKQQNASMSNTAPPPTAEEPETTAP) is disordered. Polar residues predominate over residues 569 to 578 (AKQQNASMSN). One can recognise a tRNA-binding domain in the interval 599–702 (DFAKLDLRIG…SSAQPGMPVR (104 aa)).

The protein belongs to the class-I aminoacyl-tRNA synthetase family. MetG type 1 subfamily. In terms of assembly, homodimer. It depends on Zn(2+) as a cofactor.

Its subcellular location is the cytoplasm. It catalyses the reaction tRNA(Met) + L-methionine + ATP = L-methionyl-tRNA(Met) + AMP + diphosphate. Functionally, is required not only for elongation of protein synthesis but also for the initiation of all mRNA translation through initiator tRNA(fMet) aminoacylation. This Xylella fastidiosa (strain M23) protein is Methionine--tRNA ligase.